The chain runs to 309 residues: NADH-cytochrome b5 reductase 1 (309 aa).

The helical transmembrane segment at 31–51 (DWVVYSVALALALGTWKFFQL) threads the bilayer. Residues 60–168 (TKFQEFELKE…RGPKGAFVYQ (109 aa)) form the FAD-binding FR-type domain. FAD-binding positions include 148-163 (AGLS…GPKG) and 174-208 (HFGM…QVDL).

The protein belongs to the flavoprotein pyridine nucleotide cytochrome reductase family. Monomer. Component of the 2-(3-amino-3-carboxypropyl)histidine synthase complex composed of DPH1, DPH2, DPH3 and a NADH-dependent reductase, predominantly CBR1. Requires FAD as cofactor.

The protein resides in the mitochondrion outer membrane. The enzyme catalyses 2 Fe(III)-[cytochrome b5] + NADH = 2 Fe(II)-[cytochrome b5] + NAD(+) + H(+). It carries out the reaction 2 Fe(3+)-[Dph3] + NADH = 2 Fe(2+)-[Dph3] + NAD(+) + H(+). The protein operates within protein modification; peptidyl-diphthamide biosynthesis. NADH-dependent reductase for DPH3 and cytochrome b5. Required for the first step of diphthamide biosynthesis, a post-translational modification of histidine which occurs in elongation factor 2. DPH1 and DPH2 transfer a 3-amino-3-carboxypropyl (ACP) group from S-adenosyl-L-methionine (SAM) to a histidine residue, the reaction is assisted by a reduction system comprising DPH3 and a NADH-dependent reductase, predominantly CBR1. By reducing DPH3, also involved in the formation of the tRNA wobble base modification mcm5s 2U (5-methoxycarbonylmethyl-2-thiouridine), mediated by the elongator complex. The cytochrome b5/NADH cytochrome b5 reductase electron transfer system supports the catalytic activity of several sterol biosynthetic enzymes. This chain is NADH-cytochrome b5 reductase 1 (CBR1), found in Pyricularia oryzae (strain 70-15 / ATCC MYA-4617 / FGSC 8958) (Rice blast fungus).